A 562-amino-acid polypeptide reads, in one-letter code: Beta-hexosaminidase (562 aa).

The first 22 residues, 1–22 (MVLDKMIIFHLLLWLCNVVVHA), serve as a signal peptide directing secretion. Residues Asn-38, Asn-52, Asn-111, Asn-337, Asn-382, Asn-396, and Asn-463 are each glycosylated (N-linked (GlcNAc...) asparagine).

Belongs to the glycosyl hydrolase 20 family.

It carries out the reaction Hydrolysis of terminal non-reducing N-acetyl-D-hexosamine residues in N-acetyl-beta-D-hexosaminides.. In terms of biological role, has a broad substrate specificity. This chain is Beta-hexosaminidase (HEX1), found in Candida albicans (Yeast).